We begin with the raw amino-acid sequence, 572 residues long: Proline--tRNA ligase (572 aa).

The protein belongs to the class-II aminoacyl-tRNA synthetase family. ProS type 1 subfamily. As to quaternary structure, homodimer.

The protein resides in the cytoplasm. It catalyses the reaction tRNA(Pro) + L-proline + ATP = L-prolyl-tRNA(Pro) + AMP + diphosphate. Its function is as follows. Catalyzes the attachment of proline to tRNA(Pro) in a two-step reaction: proline is first activated by ATP to form Pro-AMP and then transferred to the acceptor end of tRNA(Pro). As ProRS can inadvertently accommodate and process non-cognate amino acids such as alanine and cysteine, to avoid such errors it has two additional distinct editing activities against alanine. One activity is designated as 'pretransfer' editing and involves the tRNA(Pro)-independent hydrolysis of activated Ala-AMP. The other activity is designated 'posttransfer' editing and involves deacylation of mischarged Ala-tRNA(Pro). The misacylated Cys-tRNA(Pro) is not edited by ProRS. The polypeptide is Proline--tRNA ligase (Alteromonas mediterranea (strain DSM 17117 / CIP 110805 / LMG 28347 / Deep ecotype)).